Reading from the N-terminus, the 67-residue chain is Small ribosomal subunit protein eS27 (67 aa).

Residues Cys-22, Cys-25, Cys-41, and Cys-44 each coordinate Zn(2+). Residues 22–44 (CPDCGNEQVVFSHAAMVVRCLVC) form a C4-type zinc finger.

The protein belongs to the eukaryotic ribosomal protein eS27 family. In terms of assembly, part of the 30S ribosomal subunit. The cofactor is Zn(2+).

In Pyrobaculum islandicum (strain DSM 4184 / JCM 9189 / GEO3), this protein is Small ribosomal subunit protein eS27.